The primary structure comprises 328 residues: GMP reductase (328 aa).

Cysteine 176 serves as the catalytic Thioimidate intermediate. 205-228 lines the NADP(+) pocket; sequence IIADGGIRTHGDVAKSIRFGATMV.

The protein belongs to the IMPDH/GMPR family. GuaC type 2 subfamily.

It carries out the reaction IMP + NH4(+) + NADP(+) = GMP + NADPH + 2 H(+). In terms of biological role, catalyzes the irreversible NADPH-dependent deamination of GMP to IMP. It functions in the conversion of nucleobase, nucleoside and nucleotide derivatives of G to A nucleotides, and in maintaining the intracellular balance of A and G nucleotides. In Bacillus thuringiensis (strain Al Hakam), this protein is GMP reductase.